Consider the following 225-residue polypeptide: Large ribosomal subunit protein mL58 (225 aa).

Positions 106-138 (PQAPITTPESSSTDAAAADQHGDLPPVLYNPTK) are disordered. A compositionally biased stretch (polar residues) spans 109 to 119 (PITTPESSSTD).

This sequence belongs to the mitochondrion-specific ribosomal protein mL58 family. Component of the mitochondrial large ribosomal subunit (mt-LSU). Mature N.crassa 74S mitochondrial ribosomes consist of a small (37S) and a large (54S) subunit. The 37S small subunit contains a 16S ribosomal RNA (16S mt-rRNA) and 32 different proteins. The 54S large subunit contains a 23S rRNA (23S mt-rRNA) and 42 different proteins.

It is found in the mitochondrion. In terms of biological role, component of the mitochondrial ribosome (mitoribosome), a dedicated translation machinery responsible for the synthesis of mitochondrial genome-encoded proteins, including at least some of the essential transmembrane subunits of the mitochondrial respiratory chain. The mitoribosomes are attached to the mitochondrial inner membrane and translation products are cotranslationally integrated into the membrane. The polypeptide is Large ribosomal subunit protein mL58 (mrpl20) (Neurospora crassa (strain ATCC 24698 / 74-OR23-1A / CBS 708.71 / DSM 1257 / FGSC 987)).